An 80-amino-acid chain; its full sequence is Large ribosomal subunit protein bL31 (80 aa).

Zn(2+) is bound by residues cysteine 16, cysteine 18, cysteine 38, and cysteine 41.

Belongs to the bacterial ribosomal protein bL31 family. Type A subfamily. In terms of assembly, part of the 50S ribosomal subunit. The cofactor is Zn(2+).

In terms of biological role, binds the 23S rRNA. The chain is Large ribosomal subunit protein bL31 from Rhodococcus jostii (strain RHA1).